We begin with the raw amino-acid sequence, 428 residues long: Glutamate-1-semialdehyde 2,1-aminomutase 1 (428 aa).

Lys-267 bears the N6-(pyridoxal phosphate)lysine mark.

This sequence belongs to the class-III pyridoxal-phosphate-dependent aminotransferase family. HemL subfamily. As to quaternary structure, homodimer. Requires pyridoxal 5'-phosphate as cofactor.

The protein localises to the cytoplasm. The catalysed reaction is (S)-4-amino-5-oxopentanoate = 5-aminolevulinate. It functions in the pathway porphyrin-containing compound metabolism; protoporphyrin-IX biosynthesis; 5-aminolevulinate from L-glutamyl-tRNA(Glu): step 2/2. The chain is Glutamate-1-semialdehyde 2,1-aminomutase 1 from Staphylococcus aureus (strain Mu3 / ATCC 700698).